A 174-amino-acid polypeptide reads, in one-letter code: Ribosome maturation factor RimM (174 aa).

Residues 97-171 (EGYYYDFDII…RMVIDPIPGL (75 aa)) enclose the PRC barrel domain.

The protein belongs to the RimM family. As to quaternary structure, binds ribosomal protein uS19.

The protein localises to the cytoplasm. Its function is as follows. An accessory protein needed during the final step in the assembly of 30S ribosomal subunit, possibly for assembly of the head region. Essential for efficient processing of 16S rRNA. May be needed both before and after RbfA during the maturation of 16S rRNA. It has affinity for free ribosomal 30S subunits but not for 70S ribosomes. The protein is Ribosome maturation factor RimM of Symbiobacterium thermophilum (strain DSM 24528 / JCM 14929 / IAM 14863 / T).